Here is a 239-residue protein sequence, read N- to C-terminus: Ribonuclease PH (239 aa).

Phosphate-binding positions include arginine 87 and 125-127 (GTR).

Belongs to the RNase PH family. Homohexameric ring arranged as a trimer of dimers.

It catalyses the reaction tRNA(n+1) + phosphate = tRNA(n) + a ribonucleoside 5'-diphosphate. In terms of biological role, phosphorolytic 3'-5' exoribonuclease that plays an important role in tRNA 3'-end maturation. Removes nucleotide residues following the 3'-CCA terminus of tRNAs; can also add nucleotides to the ends of RNA molecules by using nucleoside diphosphates as substrates, but this may not be physiologically important. Probably plays a role in initiation of 16S rRNA degradation (leading to ribosome degradation) during starvation. This is Ribonuclease PH from Saccharophagus degradans (strain 2-40 / ATCC 43961 / DSM 17024).